The chain runs to 422 residues: MNEQTRISLERAAELKSKIDDYIQARKTINRGLEKEEEINKRKQKILSILNGTEEDWNNYKWQLSNRITDVDTLSKIITLTKKEKEYIKEVGTQFRWAISPYYLSLIDPEDICDPIKLLSIPTHIELEDEQEDLDPMGEEYTNPAGCITRRYPDRLIINVTNECAMYCRHCQRRRNIGQQDSHKSKAIIQESIDYIRENEEIRDVLVTGGDALTLKDDYLEWILSQLKEIPHVDYVRLGTRTLVTMPQRITDEFCNMLKKYHPVYINTHFNHPMEITKESKEACEKLANAGVPLGNQAVLLNGINNDKFVMRCLNQELLKIRVKPYYIFQSKHVKGTKHFNTSVDDGLEIMEYLRGYTSGMAIPTYIVNAPKGGGKTPLLPQYLVSKGTDYVMLRTWEGKVIKMEDEPAVDIKKLIKEQAQD.

The 222-residue stretch at 150 to 371 (RRYPDRLIIN…AIPTYIVNAP (222 aa)) folds into the Radical SAM core domain. Positions 164, 168, and 171 each coordinate [4Fe-4S] cluster. An N6-(pyridoxal phosphate)lysine modification is found at Lys-376.

It belongs to the radical SAM superfamily. Pyridoxal 5'-phosphate is required as a cofactor. [4Fe-4S] cluster serves as cofactor.

It catalyses the reaction L-glutamate = 3-aminopentanedioate. Catalyzes the interconversion of L-glutamate and L-beta-glutamate. Does not have L-lysine 2,3-aminomutase activity. This chain is Glutamate 2,3-aminomutase (eam), found in Clostridioides difficile (strain 630) (Peptoclostridium difficile).